The following is a 445-amino-acid chain: Phosphoglucosamine mutase (445 aa).

The active-site Phosphoserine intermediate is the Ser101. 4 residues coordinate Mg(2+): Ser101, Asp240, Asp242, and Asp244. Ser101 bears the Phosphoserine mark.

This sequence belongs to the phosphohexose mutase family. It depends on Mg(2+) as a cofactor. In terms of processing, activated by phosphorylation.

The enzyme catalyses alpha-D-glucosamine 1-phosphate = D-glucosamine 6-phosphate. Its function is as follows. Catalyzes the conversion of glucosamine-6-phosphate to glucosamine-1-phosphate. This is Phosphoglucosamine mutase from Ectopseudomonas mendocina (strain ymp) (Pseudomonas mendocina).